A 723-amino-acid chain; its full sequence is Threonine--tRNA ligase, mitochondrial (723 aa).

Ser-57 carries the phosphoserine modification. Residues 64–126 (RAIKISLPEG…ETDCHLRFLT (63 aa)) enclose the TGS domain.

Belongs to the class-II aminoacyl-tRNA synthetase family. In terms of assembly, homodimer.

The protein localises to the mitochondrion matrix. The enzyme catalyses tRNA(Thr) + L-threonine + ATP = L-threonyl-tRNA(Thr) + AMP + diphosphate + H(+). Its function is as follows. Catalyzes the attachment of threonine to tRNA(Thr) in a two-step reaction: threonine is first activated by ATP to form Thr-AMP and then transferred to the acceptor end of tRNA(Thr). Also edits incorrectly charged tRNA(Thr) via its editing domain. This chain is Threonine--tRNA ligase, mitochondrial (Tars2), found in Mus musculus (Mouse).